A 241-amino-acid polypeptide reads, in one-letter code: Small ribosomal subunit protein bS6 (241 aa).

The span at 97–108 (KPKIRERNRKYT) shows a compositional bias: basic residues. The disordered stretch occupies residues 97 to 241 (KPKIRERNRK…YNNKKPQSSN (145 aa)). Residues 109 to 118 (PRRDRFEKPN) are compositionally biased toward basic and acidic residues. Composition is skewed to low complexity over residues 130 to 151 (QDQQATKNQQNFQQNQQNQTSQ) and 161 to 182 (DDFQQVSSNQQNFGQNQQNQSG). Residues 189-202 (RQNQENIHQNSKNH) are compositionally biased toward polar residues.

Belongs to the bacterial ribosomal protein bS6 family.

In terms of biological role, binds together with bS18 to 16S ribosomal RNA. The chain is Small ribosomal subunit protein bS6 from Mesomycoplasma hyopneumoniae (strain 232) (Mycoplasma hyopneumoniae).